Reading from the N-terminus, the 143-residue chain is Sperm mitochondrial-associated cysteine-rich protein (143 aa).

Phosphoserine is present on residues Ser37, Ser44, and Ser110. The interval 101-143 (CCSSENKTESDSDTSGQTLEKGSQSPQSPPGAQGNWNQKKSNK) is disordered. Residues 113–126 (DTSGQTLEKGSQSP) show a composition bias toward polar residues. The residue at position 128 (Ser128) is a Phosphoserine. Residues 134 to 143 (GNWNQKKSNK) are compositionally biased toward polar residues.

Testis. Is selectively expressed in the spermatids of seminiferous tubules.

It is found in the cytoplasm. Its subcellular location is the mitochondrion membrane. Involved in sperm motility. Its absence is associated with genetic background dependent male infertility. Infertility may be due to reduced sperm motility in the female reproductive tract and inability to penetrate the oocyte zona pellucida. This chain is Sperm mitochondrial-associated cysteine-rich protein (Smcp), found in Mus musculus (Mouse).